The chain runs to 170 residues: Photosystem II extrinsic protein V (170 aa).

An N-terminal signal peptide occupies residues 1 to 34; the sequence is MNKILGIDPLKKFIFGISAFVLLFWQLNVGAANA. The heme c site is built by C70, C73, H74, and H125.

This sequence belongs to the cytochrome c family. PsbV subfamily. PSII is composed of 1 copy each of membrane proteins PsbA, PsbB, PsbC, PsbD, PsbE, PsbF, PsbH, PsbI, PsbJ, PsbK, PsbL, PsbM, PsbT, PsbX, PsbY, PsbZ, Psb30/Ycf12, peripheral proteins PsbO, CyanoQ (PsbQ), PsbU, PsbV and a large number of cofactors. It forms dimeric complexes. It depends on heme c as a cofactor.

The protein resides in the cellular thylakoid membrane. One of the extrinsic, lumenal subunits of photosystem II (PSII). PSII is a light-driven water plastoquinone oxidoreductase, using light energy to abstract electrons from H(2)O, generating a proton gradient subsequently used for ATP formation. The extrinsic proteins stabilize the structure of photosystem II oxygen-evolving complex (OEC), the ion environment of oxygen evolution and protect the OEC against heat-induced inactivation. Low-potential cytochrome c that plays a role in the OEC of PSII. The sequence is that of Photosystem II extrinsic protein V from Picosynechococcus sp. (strain ATCC 27264 / PCC 7002 / PR-6) (Agmenellum quadruplicatum).